The sequence spans 106 residues: Iron-sulfur cluster assembly protein CyaY (106 aa).

The protein belongs to the frataxin family.

Its function is as follows. Involved in iron-sulfur (Fe-S) cluster assembly. May act as a regulator of Fe-S biogenesis. This Salmonella typhimurium (strain LT2 / SGSC1412 / ATCC 700720) protein is Iron-sulfur cluster assembly protein CyaY.